The sequence spans 144 residues: 3-hydroxyacyl-[acyl-carrier-protein] dehydratase FabZ (144 aa).

Residue histidine 48 is part of the active site.

It belongs to the thioester dehydratase family. FabZ subfamily.

The protein localises to the cytoplasm. The enzyme catalyses a (3R)-hydroxyacyl-[ACP] = a (2E)-enoyl-[ACP] + H2O. Functionally, involved in unsaturated fatty acids biosynthesis. Catalyzes the dehydration of short chain beta-hydroxyacyl-ACPs and long chain saturated and unsaturated beta-hydroxyacyl-ACPs. The chain is 3-hydroxyacyl-[acyl-carrier-protein] dehydratase FabZ from Listeria monocytogenes serotype 4b (strain CLIP80459).